A 98-amino-acid polypeptide reads, in one-letter code: Large ribosomal subunit protein uL23 (98 aa).

It belongs to the universal ribosomal protein uL23 family. Part of the 50S ribosomal subunit. Contacts protein L29, and trigger factor when it is bound to the ribosome.

One of the early assembly proteins it binds 23S rRNA. One of the proteins that surrounds the polypeptide exit tunnel on the outside of the ribosome. Forms the main docking site for trigger factor binding to the ribosome. The polypeptide is Large ribosomal subunit protein uL23 (Rickettsia africae (strain ESF-5)).